The following is a 108-amino-acid chain: UPF0060 membrane protein YnfA (108 aa).

Residues 1–5 are Periplasmic-facing; sequence MIKTT. Residues 6–26 traverse the membrane as a helical segment; the sequence is LLFFATALCEIIGCFLPWLWL. Over 27 to 30 the chain is Cytoplasmic; it reads KRNA. The helical transmembrane segment at 31–51 threads the bilayer; it reads SIWLLLPAGISLALFVWLLTL. Topologically, residues 52 to 60 are periplasmic; that stretch reads HPAASGRVY. The chain crosses the membrane as a helical span at residues 61–81; it reads AAYGGVYVCTALIWLRVVDGV. At 82–84 the chain is on the cytoplasmic side; sequence KLT. Residues 85–105 form a helical membrane-spanning segment; the sequence is LYDWTGALIALCGMLIIVAGW. Topologically, residues 106–108 are periplasmic; it reads GRT.

The protein belongs to the UPF0060 family.

It localises to the cell inner membrane. This is UPF0060 membrane protein YnfA from Escherichia coli O127:H6 (strain E2348/69 / EPEC).